The following is a 331-amino-acid chain: Ribosomal RNA small subunit methyltransferase H (331 aa).

Residues 38 to 40 (GGY), aspartate 56, phenylalanine 83, aspartate 100, and glutamine 107 each bind S-adenosyl-L-methionine. The tract at residues 287 to 331 (DEAELAENPRARSARLRVGVRTDAPAGKVDPQALGTPLIPKKGRR) is disordered.

The protein belongs to the methyltransferase superfamily. RsmH family.

The protein resides in the cytoplasm. It carries out the reaction cytidine(1402) in 16S rRNA + S-adenosyl-L-methionine = N(4)-methylcytidine(1402) in 16S rRNA + S-adenosyl-L-homocysteine + H(+). Its function is as follows. Specifically methylates the N4 position of cytidine in position 1402 (C1402) of 16S rRNA. The protein is Ribosomal RNA small subunit methyltransferase H of Cereibacter sphaeroides (strain ATCC 17023 / DSM 158 / JCM 6121 / CCUG 31486 / LMG 2827 / NBRC 12203 / NCIMB 8253 / ATH 2.4.1.) (Rhodobacter sphaeroides).